Reading from the N-terminus, the 511-residue chain is Cytochrome P450 4B1 (511 aa).

Glutamate 315 is a binding site for heme. Serine 436 is subject to Phosphoserine. A heme-binding site is contributed by cysteine 453.

This sequence belongs to the cytochrome P450 family. Heme is required as a cofactor. As to expression, detected in the liver and lung (at protein level).

It localises to the endoplasmic reticulum membrane. It is found in the microsome membrane. It carries out the reaction an organic molecule + reduced [NADPH--hemoprotein reductase] + O2 = an alcohol + oxidized [NADPH--hemoprotein reductase] + H2O + H(+). Functionally, cytochromes P450 are a group of heme-thiolate monooxygenases. In liver microsomes, this enzyme is involved in an NADPH-dependent electron transport pathway. It oxidizes a variety of structurally unrelated compounds, including steroids, fatty acids, and xenobiotics. The chain is Cytochrome P450 4B1 (CYP4B1) from Homo sapiens (Human).